We begin with the raw amino-acid sequence, 145 residues long: 3-dehydroquinate dehydratase (145 aa).

Residue Tyr24 is the Proton acceptor of the active site. Substrate-binding residues include Asn75, His81, and Asp88. His101 serves as the catalytic Proton donor. Substrate is bound by residues 102-103 and Arg112; that span reads IS.

This sequence belongs to the type-II 3-dehydroquinase family. Homododecamer.

It carries out the reaction 3-dehydroquinate = 3-dehydroshikimate + H2O. Its pathway is metabolic intermediate biosynthesis; chorismate biosynthesis; chorismate from D-erythrose 4-phosphate and phosphoenolpyruvate: step 3/7. Functionally, catalyzes a trans-dehydration via an enolate intermediate. The polypeptide is 3-dehydroquinate dehydratase (Rhizobium johnstonii (strain DSM 114642 / LMG 32736 / 3841) (Rhizobium leguminosarum bv. viciae)).